Consider the following 226-residue polypeptide: ATP synthase subunit a (226 aa).

6 consecutive transmembrane segments (helical) span residues 18-38 (FITGFFVVLTAVLMFFISLGA), 79-99 (LAGTIALYVFFSNMIGIIPGF), 105-125 (SWSFTLVLALIVFFYYHFEGI), 134-154 (FAHFAGPVKWLAPFMFPIEII), 179-199 (LIMLLLVPWAVPVAPFMVLFF), and 201-221 (GILQAFVFMILTYVYLAGAVL).

The protein belongs to the ATPase A chain family. F-type ATPases have 2 components, CF(1) - the catalytic core - and CF(0) - the membrane proton channel. CF(1) has five subunits: alpha(3), beta(3), gamma(1), delta(1), epsilon(1). CF(0) has three main subunits: a(1), b(2) and c(9-12). The alpha and beta chains form an alternating ring which encloses part of the gamma chain. CF(1) is attached to CF(0) by a central stalk formed by the gamma and epsilon chains, while a peripheral stalk is formed by the delta and b chains.

Its subcellular location is the cell inner membrane. Key component of the proton channel; it plays a direct role in the translocation of protons across the membrane. In Helicobacter pylori (strain J99 / ATCC 700824) (Campylobacter pylori J99), this protein is ATP synthase subunit a.